The primary structure comprises 208 residues: 2-phospho-L-lactate guanylyltransferase (208 aa).

It belongs to the CofC family. Homodimer.

It carries out the reaction (2S)-2-phospholactate + GTP + H(+) = (2S)-lactyl-2-diphospho-5'-guanosine + diphosphate. Its pathway is cofactor biosynthesis; coenzyme F420 biosynthesis. In terms of biological role, guanylyltransferase that catalyzes the activation of (2S)-2-phospholactate (2-PL) as (2S)-lactyl-2-diphospho-5'-guanosine, via the condensation of 2-PL with GTP. It is involved in the biosynthesis of coenzyme F420, a hydride carrier cofactor. The polypeptide is 2-phospho-L-lactate guanylyltransferase (Methanosarcina barkeri (strain Fusaro / DSM 804)).